A 328-amino-acid chain; its full sequence is tRNA uridine(34) hydroxylase (328 aa).

A Rhodanese domain is found at Gln-122–Trp-218. Cys-178 serves as the catalytic Cysteine persulfide intermediate.

It belongs to the TrhO family.

The enzyme catalyses uridine(34) in tRNA + AH2 + O2 = 5-hydroxyuridine(34) in tRNA + A + H2O. Functionally, catalyzes oxygen-dependent 5-hydroxyuridine (ho5U) modification at position 34 in tRNAs. The polypeptide is tRNA uridine(34) hydroxylase (Chlamydia muridarum (strain MoPn / Nigg)).